A 196-amino-acid chain; its full sequence is Small ribosomal subunit protein uS4c (196 aa).

The tract at residues 15 to 36 (LGTLPGLTSKRPRSGSDLKNPL) is disordered. The region spanning 89-150 (MRLDNILFRL…KQRSKALIQN (62 aa)) is the S4 RNA-binding domain.

This sequence belongs to the universal ribosomal protein uS4 family. As to quaternary structure, part of the 30S ribosomal subunit. Contacts protein S5. The interaction surface between S4 and S5 is involved in control of translational fidelity.

The protein localises to the plastid. Its subcellular location is the chloroplast. In terms of biological role, one of the primary rRNA binding proteins, it binds directly to 16S rRNA where it nucleates assembly of the body of the 30S subunit. Its function is as follows. With S5 and S12 plays an important role in translational accuracy. This is Small ribosomal subunit protein uS4c (rps4) from Yucca filamentosa (Bear-grass).